The chain runs to 382 residues: Trophoblast glycoprotein-like (382 aa).

The N-terminal stretch at 1 to 26 (MAPRAGQPGLQGLLLVAAALSQPAAP) is a signal peptide. Disulfide bonds link C27/C33 and C31/C43. Over 27–307 (CPFQCYCFGG…EAAGPELEAS (281 aa)) the chain is Extracellular. 5 LRR repeats span residues 57–80 (PPDARNLTIVGANLTVLRAAAFAG), 93–116 (LPLLSALRLTHNHIEVVEDGAFDG), 117–140 (LPSLAALDLSHNPLRALGGGAFRG), 171–194 (LAELRLLGLAGNALSRLPPAALRL), and 196–217 (RLEQLDVRLNALAGLDPDELRA). The N-linked (GlcNAc...) asparagine glycan is linked to N62. Disulfide bonds link C238/C264 and C240/C285. Residues 308-328 (YVFFGLVLALIGLIFLMVLYL) form a helical membrane-spanning segment. The Cytoplasmic segment spans residues 329–382 (NRRGIQRWMRNLREACRDQMEGYHYRYEQDADPRRAPAPAAPAGSRATSPGSGL). Positions 358–382 (DADPRRAPAPAAPAGSRATSPGSGL) are disordered. Low complexity predominate over residues 365–382 (PAPAAPAGSRATSPGSGL).

Its subcellular location is the membrane. The polypeptide is Trophoblast glycoprotein-like (TPBGL) (Homo sapiens (Human)).